A 302-amino-acid chain; its full sequence is Proline dehydrogenase 1 (302 aa).

Lys95 provides a ligand contact to substrate. Asp129 is a catalytic residue. Positions 130 and 158 each coordinate FAD. The active site involves Arg179. Residues 182-184 and 221-222 contribute to the FAD site; these read KGA and TH. A substrate-binding site is contributed by 283–284; that stretch reads RR.

The protein belongs to the proline oxidase family. The cofactor is FAD.

The enzyme catalyses L-proline + a quinone = (S)-1-pyrroline-5-carboxylate + a quinol + H(+). Its pathway is amino-acid degradation; L-proline degradation into L-glutamate; L-glutamate from L-proline: step 1/2. In terms of biological role, converts proline to delta-1-pyrroline-5-carboxylate. The polypeptide is Proline dehydrogenase 1 (fadM) (Bacillus subtilis subsp. natto).